The following is a 688-amino-acid chain: NADH-ubiquinone oxidoreductase 75 kDa subunit (688 aa).

Residues 1–85 enclose the 2Fe-2S ferredoxin-type domain; sequence MLIRFKINEI…DESIETEIDE (85 aa). Residues Cys38, Cys49, Cys52, and Cys66 each coordinate [2Fe-2S] cluster. Positions 85–124 constitute a 4Fe-4S His(Cys)3-ligated-type domain; the sequence is EILKAREGVMEFLLINHPLDCPICDQGGECDLQEQTIAYG. Residues His101, Cys105, Cys108, Cys114, Cys153, Cys156, Cys159, and Cys204 each coordinate [4Fe-4S] cluster. The region spanning 223-279 is the 4Fe-4S Mo/W bis-MGD-type domain; that stretch reads LKNIKGIDIFDTVLTPINYQVKGGEIFRILPRINDRLNEEWITDKVRFHYESYKIIE.

Belongs to the complex I 75 kDa subunit family. As to quaternary structure, complex I is composed of about 45 different subunits. [2Fe-2S] cluster is required as a cofactor. It depends on [4Fe-4S] cluster as a cofactor.

It is found in the mitochondrion inner membrane. The enzyme catalyses a ubiquinone + NADH + 5 H(+)(in) = a ubiquinol + NAD(+) + 4 H(+)(out). Core subunit of the mitochondrial membrane respiratory chain NADH dehydrogenase (Complex I) that is believed to belong to the minimal assembly required for catalysis. Complex I functions in the transfer of electrons from NADH to the respiratory chain. The immediate electron acceptor for the enzyme is believed to be ubiquinone. This is the largest subunit of complex I and it is a component of the iron-sulfur (IP) fragment of the enzyme. It may form part of the active site crevice where NADH is oxidized. The chain is NADH-ubiquinone oxidoreductase 75 kDa subunit (nad11) from Dictyostelium citrinum (Slime mold).